The sequence spans 291 residues: MEMO1 family protein TON_0132 (291 aa).

The protein belongs to the MEMO1 family.

The chain is MEMO1 family protein TON_0132 from Thermococcus onnurineus (strain NA1).